A 174-amino-acid polypeptide reads, in one-letter code: UPF0340 protein SE_1711 (174 aa).

The protein belongs to the UPF0340 family.

The sequence is that of UPF0340 protein SE_1711 from Staphylococcus epidermidis (strain ATCC 12228 / FDA PCI 1200).